The chain runs to 134 residues: UPF0412 protein YaaI (134 aa).

Positions 1–23 (MKSVFTLSASLAISLLLCCTAQA) are cleaved as a signal peptide.

It belongs to the UPF0412 family.

The polypeptide is UPF0412 protein YaaI (Escherichia coli (strain SMS-3-5 / SECEC)).